The following is a 1033-amino-acid chain: Isoleucine--tRNA ligase 2 (1033 aa).

Positions 47-57 (PTANGLPHVGH) match the 'HIGH' region motif. The short motif at 590 to 594 (KMSKS) is the 'KMSKS' region element. Residue lysine 593 participates in ATP binding.

Belongs to the class-I aminoacyl-tRNA synthetase family. IleS type 2 subfamily. As to quaternary structure, monomer. It depends on Zn(2+) as a cofactor.

It is found in the cytoplasm. It carries out the reaction tRNA(Ile) + L-isoleucine + ATP = L-isoleucyl-tRNA(Ile) + AMP + diphosphate. Its function is as follows. Catalyzes the attachment of isoleucine to tRNA(Ile). As IleRS can inadvertently accommodate and process structurally similar amino acids such as valine, to avoid such errors it has two additional distinct tRNA(Ile)-dependent editing activities. One activity is designated as 'pretransfer' editing and involves the hydrolysis of activated Val-AMP. The other activity is designated 'posttransfer' editing and involves deacylation of mischarged Val-tRNA(Ile). The protein is Isoleucine--tRNA ligase 2 of Bacillus cereus (strain ATCC 14579 / DSM 31 / CCUG 7414 / JCM 2152 / NBRC 15305 / NCIMB 9373 / NCTC 2599 / NRRL B-3711).